The primary structure comprises 470 residues: Ribulose bisphosphate carboxylase large chain (470 aa).

Residues Asn115 and Thr165 each contribute to the substrate site. Lys167 acts as the Proton acceptor in catalysis. Lys169 is a binding site for substrate. Lys193, Asp195, and Glu196 together coordinate Mg(2+). Lys193 carries the post-translational modification N6-carboxylysine. His286 functions as the Proton acceptor in the catalytic mechanism. Substrate contacts are provided by Arg287, His319, and Ser371.

It belongs to the RuBisCO large chain family. Type I subfamily. In terms of assembly, heterohexadecamer of 8 large chains and 8 small chains. The cofactor is Mg(2+).

It localises to the carboxysome. It catalyses the reaction 2 (2R)-3-phosphoglycerate + 2 H(+) = D-ribulose 1,5-bisphosphate + CO2 + H2O. It carries out the reaction D-ribulose 1,5-bisphosphate + O2 = 2-phosphoglycolate + (2R)-3-phosphoglycerate + 2 H(+). Functionally, ruBisCO catalyzes two reactions: the carboxylation of D-ribulose 1,5-bisphosphate, the primary event in carbon dioxide fixation, as well as the oxidative fragmentation of the pentose substrate in the photorespiration process. Both reactions occur simultaneously and in competition at the same active site. The sequence is that of Ribulose bisphosphate carboxylase large chain from Prochlorococcus marinus (strain MIT 9303).